A 251-amino-acid polypeptide reads, in one-letter code: UDP-N-acetylglucosamine--dolichyl-phosphate N-acetylglucosaminyltransferase (251 aa).

A helical transmembrane segment spans residues 150–167; sequence VGNLGLSFITFLLGGYYV.

The protein belongs to the glycosyltransferase 2 family.

It is found in the cell membrane. It catalyses the reaction a di-trans,poly-cis-dolichyl phosphate + UDP-N-acetyl-alpha-D-glucosamine = an N-acetyl-alpha-D-glucosaminyl-phospho-di-trans,poly-cis-dolichol + UDP. Its pathway is cell surface structure biogenesis; S-layer biogenesis. The protein operates within protein modification; protein glycosylation. In terms of biological role, involved in the assembly of an N-linked disaccharide that decorates the S-layer glycoprotein and flagellins. AglK initiates N-linked glycosylation through the formation of alpha-linked dolichyl monophosphate N-acetylglucosamine. It catalyzes the transfer of GlcNAc from the donor substrate UDP-GlcNAc to dolichyl phosphate C55 (Dol-P) to yield Dol-P-GlcNAc. AglK reaction proceeds with retention of stereochemistry. The reaction is specific for UDP-GlcNAc. AglK shows a stronger preference for short dolichol (C55-60 Dol-P) substrates compared with the longer (C85-105 Dol-P). The sequence is that of UDP-N-acetylglucosamine--dolichyl-phosphate N-acetylglucosaminyltransferase from Methanococcus voltae.